The following is a 318-amino-acid chain: Beta-ketoacyl-[acyl-carrier-protein] synthase III (318 aa).

Active-site residues include Cys-112 and His-245. The interval Gln-246–Arg-250 is ACP-binding. Asn-275 is an active-site residue.

It belongs to the thiolase-like superfamily. FabH family. Homodimer.

It is found in the cytoplasm. The catalysed reaction is malonyl-[ACP] + acetyl-CoA + H(+) = 3-oxobutanoyl-[ACP] + CO2 + CoA. Its pathway is lipid metabolism; fatty acid biosynthesis. Functionally, catalyzes the condensation reaction of fatty acid synthesis by the addition to an acyl acceptor of two carbons from malonyl-ACP. Catalyzes the first condensation reaction which initiates fatty acid synthesis and may therefore play a role in governing the total rate of fatty acid production. Possesses both acetoacetyl-ACP synthase and acetyl transacylase activities. Its substrate specificity determines the biosynthesis of branched-chain and/or straight-chain of fatty acids. This chain is Beta-ketoacyl-[acyl-carrier-protein] synthase III, found in Blochmanniella floridana.